The following is a 348-amino-acid chain: Dihydroorotase (348 aa).

The Zn(2+) site is built by His17 and His19. Residues His19–Arg21 and Asn45 contribute to the substrate site. Residues Lys103, His140, and His178 each contribute to the Zn(2+) site. Lys103 carries the N6-carboxylysine modification. His140 contributes to the substrate binding site. Leu223 lines the substrate pocket. Zn(2+) is bound at residue Asp251. Asp251 is a catalytic residue. Positions 255 and 267 each coordinate substrate.

Belongs to the metallo-dependent hydrolases superfamily. DHOase family. Class II DHOase subfamily. In terms of assembly, homodimer. Zn(2+) serves as cofactor.

The enzyme catalyses (S)-dihydroorotate + H2O = N-carbamoyl-L-aspartate + H(+). The protein operates within pyrimidine metabolism; UMP biosynthesis via de novo pathway; (S)-dihydroorotate from bicarbonate: step 3/3. Catalyzes the reversible cyclization of carbamoyl aspartate to dihydroorotate. This chain is Dihydroorotase, found in Salmonella agona (strain SL483).